The following is a 240-amino-acid chain: Ribosome maturation protein SDO1 homolog (240 aa).

This sequence belongs to the SDO1/SBDS family.

This Methanocaldococcus jannaschii (strain ATCC 43067 / DSM 2661 / JAL-1 / JCM 10045 / NBRC 100440) (Methanococcus jannaschii) protein is Ribosome maturation protein SDO1 homolog.